The following is a 1062-amino-acid chain: Carbamoyl phosphate synthase large chain (1062 aa).

A carboxyphosphate synthetic domain region spans residues M1 to E401. The ATP site is built by R129, R169, G175, G176, K208, I210, E215, G241, I242, H243, Q284, and E298. In terms of domain architecture, ATP-grasp 1 spans K133–I327. Positions 284, 298, and 300 each coordinate Mg(2+). Mn(2+) is bound by residues Q284, E298, and N300. The segment at I402 to S546 is oligomerization domain. A carbamoyl phosphate synthetic domain region spans residues H547–K929. An ATP-grasp 2 domain is found at D671–M861. Residues R707, D746, L748, E752, G777, V778, H779, S780, Q820, and E832 each coordinate ATP. Residues Q820, E832, and N834 each coordinate Mg(2+). Mn(2+) contacts are provided by Q820, E832, and N834. In terms of domain architecture, MGS-like spans M930–K1062. Positions M930–K1062 are allosteric domain.

Belongs to the CarB family. As to quaternary structure, composed of two chains; the small (or glutamine) chain promotes the hydrolysis of glutamine to ammonia, which is used by the large (or ammonia) chain to synthesize carbamoyl phosphate. Tetramer of heterodimers (alpha,beta)4. The cofactor is Mg(2+). It depends on Mn(2+) as a cofactor.

It carries out the reaction hydrogencarbonate + L-glutamine + 2 ATP + H2O = carbamoyl phosphate + L-glutamate + 2 ADP + phosphate + 2 H(+). It catalyses the reaction hydrogencarbonate + NH4(+) + 2 ATP = carbamoyl phosphate + 2 ADP + phosphate + 2 H(+). Its pathway is amino-acid biosynthesis; L-arginine biosynthesis; carbamoyl phosphate from bicarbonate: step 1/1. It participates in pyrimidine metabolism; UMP biosynthesis via de novo pathway; (S)-dihydroorotate from bicarbonate: step 1/3. Functionally, large subunit of the glutamine-dependent carbamoyl phosphate synthetase (CPSase). CPSase catalyzes the formation of carbamoyl phosphate from the ammonia moiety of glutamine, carbonate, and phosphate donated by ATP, constituting the first step of 2 biosynthetic pathways, one leading to arginine and/or urea and the other to pyrimidine nucleotides. The large subunit (synthetase) binds the substrates ammonia (free or transferred from glutamine from the small subunit), hydrogencarbonate and ATP and carries out an ATP-coupled ligase reaction, activating hydrogencarbonate by forming carboxy phosphate which reacts with ammonia to form carbamoyl phosphate. In Lactobacillus johnsonii (strain CNCM I-12250 / La1 / NCC 533), this protein is Carbamoyl phosphate synthase large chain.